A 334-amino-acid polypeptide reads, in one-letter code: Trans-1,2-dihydrobenzene-1,2-diol dehydrogenase (334 aa).

Belongs to the Gfo/Idh/MocA family. Homodimer.

It catalyses the reaction (1R,2R)-1,2-dihydrobenzene-1,2-diol + NADP(+) = catechol + NADPH + H(+). The catalysed reaction is D-xylose + NADP(+) = D-xylono-1,5-lactone + NADPH + H(+). This chain is Trans-1,2-dihydrobenzene-1,2-diol dehydrogenase (dhdh), found in Danio rerio (Zebrafish).